The following is a 246-amino-acid chain: tRNA pseudouridine synthase A (246 aa).

The Nucleophile role is filled by D52. Y111 lines the substrate pocket.

The protein belongs to the tRNA pseudouridine synthase TruA family. In terms of assembly, homodimer.

The catalysed reaction is uridine(38/39/40) in tRNA = pseudouridine(38/39/40) in tRNA. In terms of biological role, formation of pseudouridine at positions 38, 39 and 40 in the anticodon stem and loop of transfer RNAs. In Borrelia garinii subsp. bavariensis (strain ATCC BAA-2496 / DSM 23469 / PBi) (Borreliella bavariensis), this protein is tRNA pseudouridine synthase A.